Here is a 141-residue protein sequence, read N- to C-terminus: Large-conductance mechanosensitive channel (141 aa).

The next 2 membrane-spanning stretches (helical) occupy residues 16–36 (VIDL…VDSL) and 83–103 (GAFI…FVAI).

Belongs to the MscL family. Homopentamer.

The protein localises to the cell inner membrane. Functionally, channel that opens in response to stretch forces in the membrane lipid bilayer. May participate in the regulation of osmotic pressure changes within the cell. This Azoarcus sp. (strain BH72) protein is Large-conductance mechanosensitive channel.